The chain runs to 363 residues: TLTAAITMALSTISGKQGKKYDDIDSAPEEKARGITINTAHVEYETETRHYAHVDCPGHADYVKNMITGAAQMDGAILVVSGADGPMPQTKEHLLLAKQVGVPSIVVFLNKEDQVDDEELLELVELEVREMLDNYDFPGDDTPIITGSALLALQALTDTTDAIGRGSNPWVDKILTLMDNVDEYIPTPERETEKPFLMAVEDVFSITGRGTVATGRVERGGIKIGDTVEIVGLKETRSTTVTGLKMFQKMLQESIAGDNVGMLLRGIQKTDIQRGMVIAQPGSITPHVSFEAQVYVLTKEEGGRHTPFLSGYRPQFYVRTTDVTGKVESLKSDEDKSEMKMVVPGDRVTMSVELVQPIAIEKG.

A tr-type G domain is found at 1–189 (TLTAAITMAL…NVDEYIPTPE (189 aa)). Residues 55-59 (DCPGH) and 110-113 (NKED) contribute to the GTP site.

Belongs to the TRAFAC class translation factor GTPase superfamily. Classic translation factor GTPase family. EF-Tu/EF-1A subfamily.

The protein resides in the plastid. Its subcellular location is the chloroplast. The catalysed reaction is GTP + H2O = GDP + phosphate + H(+). Functionally, GTP hydrolase that promotes the GTP-dependent binding of aminoacyl-tRNA to the A-site of ribosomes during protein biosynthesis. This chain is Elongation factor Tu, chloroplastic (tufA), found in Gymnochlora stellata.